The sequence spans 183 residues: Large ribosomal subunit protein uL5 (183 aa).

This sequence belongs to the universal ribosomal protein uL5 family. Part of the 50S ribosomal subunit; part of the 5S rRNA/L5/L18/L25 subcomplex. Contacts the 5S rRNA and the P site tRNA. Forms a bridge to the 30S subunit in the 70S ribosome.

Functionally, this is one of the proteins that bind and probably mediate the attachment of the 5S RNA into the large ribosomal subunit, where it forms part of the central protuberance. In the 70S ribosome it contacts protein S13 of the 30S subunit (bridge B1b), connecting the 2 subunits; this bridge is implicated in subunit movement. Contacts the P site tRNA; the 5S rRNA and some of its associated proteins might help stabilize positioning of ribosome-bound tRNAs. In Fusobacterium nucleatum subsp. nucleatum (strain ATCC 25586 / DSM 15643 / BCRC 10681 / CIP 101130 / JCM 8532 / KCTC 2640 / LMG 13131 / VPI 4355), this protein is Large ribosomal subunit protein uL5.